Consider the following 218-residue polypeptide: NAD(P)H-quinone oxidoreductase subunit I (218 aa).

4Fe-4S ferredoxin-type domains are found at residues 55–84 (GRIH…VDWV) and 95–124 (RNYS…MTEE). Residues cysteine 64, cysteine 67, cysteine 70, cysteine 74, cysteine 104, cysteine 107, cysteine 110, and cysteine 114 each coordinate [4Fe-4S] cluster. A disordered region spans residues 179–218 (LRAGKLPSQIIKELQADKSEEEGKNNSSDMVPNKLNSTNK). Positions 192–202 (LQADKSEEEGK) are enriched in basic and acidic residues. The segment covering 203-218 (NNSSDMVPNKLNSTNK) has biased composition (polar residues).

This sequence belongs to the complex I 23 kDa subunit family. As to quaternary structure, NDH-1 is composed of at least 11 different subunits. It depends on [4Fe-4S] cluster as a cofactor.

The protein localises to the cellular thylakoid membrane. It catalyses the reaction a plastoquinone + NADH + (n+1) H(+)(in) = a plastoquinol + NAD(+) + n H(+)(out). The enzyme catalyses a plastoquinone + NADPH + (n+1) H(+)(in) = a plastoquinol + NADP(+) + n H(+)(out). Its function is as follows. NDH-1 shuttles electrons from an unknown electron donor, via FMN and iron-sulfur (Fe-S) centers, to quinones in the respiratory and/or the photosynthetic chain. The immediate electron acceptor for the enzyme in this species is believed to be plastoquinone. Couples the redox reaction to proton translocation, and thus conserves the redox energy in a proton gradient. The chain is NAD(P)H-quinone oxidoreductase subunit I from Prochlorococcus marinus (strain NATL2A).